The chain runs to 404 residues: Probable RNA polymerase sigma-C factor (404 aa).

The Polymerase core binding motif lies at 193–206; that stretch reads DLIQEGTLGLERAV. Positions 362-381 form a DNA-binding region, H-T-H motif; that stretch reads LSEIGRILNLSRERVRQIEA.

This sequence belongs to the sigma-70 factor family.

Its function is as follows. Sigma factors are initiation factors that promote the attachment of RNA polymerase to specific initiation sites and are then released. The polypeptide is Probable RNA polymerase sigma-C factor (sigC) (Synechocystis sp. (strain ATCC 27184 / PCC 6803 / Kazusa)).